The following is a 77-amino-acid chain: Secapin (77 aa).

Residues 1-32 (MKNYSKNATYLITVLLFSFVAMLLIIPSKCEA) form the signal peptide. A propeptide spanning residues 33-52 (VSNDMQPLEARSADLVPEPR) is cleaved from the precursor. Cys61 and Cys72 are joined by a disulfide.

Belongs to the secapin family. Expressed by the venom gland.

The protein resides in the secreted. Its function is as follows. Nontoxic peptide. This chain is Secapin, found in Vespa magnifica (Hornet).